The following is a 70-amino-acid chain: Cytochrome c oxidase subunit 8B, mitochondrial (70 aa).

The N-terminal 24 residues, 1-24, are a transit peptide targeting the mitochondrion; sequence MPRLPPILRLLQAPAKFTVVPKAH. Over 25–38 the chain is Mitochondrial matrix; it reads VSAKPAKTPTSAVE. The chain crosses the membrane as a helical span at residues 39–60; that stretch reads QAVGISAIVVGFMVPAGWVLAH. Topologically, residues 61-70 are mitochondrial intermembrane; it reads LESYKKSSAA.

Belongs to the cytochrome c oxidase VIII family. As to quaternary structure, component of the cytochrome c oxidase (complex IV, CIV), a multisubunit enzyme composed of 14 subunits. The complex is composed of a catalytic core of 3 subunits MT-CO1, MT-CO2 and MT-CO3, encoded in the mitochondrial DNA, and 11 supernumerary subunits COX4I, COX5A, COX5B, COX6A, COX6B, COX6C, COX7A, COX7B, COX7C, COX8 and NDUFA4, which are encoded in the nuclear genome. The complex exists as a monomer or a dimer and forms supercomplexes (SCs) in the inner mitochondrial membrane with NADH-ubiquinone oxidoreductase (complex I, CI) and ubiquinol-cytochrome c oxidoreductase (cytochrome b-c1 complex, complex III, CIII), resulting in different assemblies (supercomplex SCI(1)III(2)IV(1) and megacomplex MCI(2)III(2)IV(2)).

It is found in the mitochondrion inner membrane. Its pathway is energy metabolism; oxidative phosphorylation. Functionally, component of the cytochrome c oxidase, the last enzyme in the mitochondrial electron transport chain which drives oxidative phosphorylation. The respiratory chain contains 3 multisubunit complexes succinate dehydrogenase (complex II, CII), ubiquinol-cytochrome c oxidoreductase (cytochrome b-c1 complex, complex III, CIII) and cytochrome c oxidase (complex IV, CIV), that cooperate to transfer electrons derived from NADH and succinate to molecular oxygen, creating an electrochemical gradient over the inner membrane that drives transmembrane transport and the ATP synthase. Cytochrome c oxidase is the component of the respiratory chain that catalyzes the reduction of oxygen to water. Electrons originating from reduced cytochrome c in the intermembrane space (IMS) are transferred via the dinuclear copper A center (CU(A)) of subunit 2 and heme A of subunit 1 to the active site in subunit 1, a binuclear center (BNC) formed by heme A3 and copper B (CU(B)). The BNC reduces molecular oxygen to 2 water molecules using 4 electrons from cytochrome c in the IMS and 4 protons from the mitochondrial matrix. The sequence is that of Cytochrome c oxidase subunit 8B, mitochondrial (Cox8b) from Mus musculus (Mouse).